The following is a 350-amino-acid chain: Phosphoribosylformylglycinamidine cyclo-ligase (350 aa).

The protein belongs to the AIR synthase family.

It localises to the cytoplasm. The catalysed reaction is 2-formamido-N(1)-(5-O-phospho-beta-D-ribosyl)acetamidine + ATP = 5-amino-1-(5-phospho-beta-D-ribosyl)imidazole + ADP + phosphate + H(+). Its pathway is purine metabolism; IMP biosynthesis via de novo pathway; 5-amino-1-(5-phospho-D-ribosyl)imidazole from N(2)-formyl-N(1)-(5-phospho-D-ribosyl)glycinamide: step 2/2. In Cupriavidus metallidurans (strain ATCC 43123 / DSM 2839 / NBRC 102507 / CH34) (Ralstonia metallidurans), this protein is Phosphoribosylformylglycinamidine cyclo-ligase.